A 248-amino-acid chain; its full sequence is Adenosylcobinamide-GDP ribazoletransferase (248 aa).

Transmembrane regions (helical) follow at residues phenylalanine 36–leucine 56, phenylalanine 59–glycine 79, phenylalanine 113–valine 133, cysteine 137–leucine 157, isoleucine 170–methionine 190, and isoleucine 199–leucine 219.

Belongs to the CobS family. The cofactor is Mg(2+).

Its subcellular location is the cell membrane. It carries out the reaction alpha-ribazole + adenosylcob(III)inamide-GDP = adenosylcob(III)alamin + GMP + H(+). The enzyme catalyses alpha-ribazole 5'-phosphate + adenosylcob(III)inamide-GDP = adenosylcob(III)alamin 5'-phosphate + GMP + H(+). It functions in the pathway cofactor biosynthesis; adenosylcobalamin biosynthesis; adenosylcobalamin from cob(II)yrinate a,c-diamide: step 7/7. In terms of biological role, joins adenosylcobinamide-GDP and alpha-ribazole to generate adenosylcobalamin (Ado-cobalamin). Also synthesizes adenosylcobalamin 5'-phosphate from adenosylcobinamide-GDP and alpha-ribazole 5'-phosphate. This is Adenosylcobinamide-GDP ribazoletransferase from Clostridium botulinum (strain 657 / Type Ba4).